The primary structure comprises 539 residues: Probable protein kinase UbiB (539 aa).

A Protein kinase domain is found at 125-493 (RFDVEPLASA…RRRQGDRWAL (369 aa)). ATP-binding positions include 131–139 (LASASVAQV) and Lys153. Catalysis depends on Asp288, which acts as the Proton acceptor. 2 helical membrane-spanning segments follow: residues 495 to 515 (LLGAGLLGGGAVLAASAAEAA) and 517 to 537 (LAAPAAWPAWLMLAAGLYLIV).

The protein belongs to the ABC1 family. UbiB subfamily.

Its subcellular location is the cell inner membrane. Its pathway is cofactor biosynthesis; ubiquinone biosynthesis [regulation]. In terms of biological role, is probably a protein kinase regulator of UbiI activity which is involved in aerobic coenzyme Q (ubiquinone) biosynthesis. In Pseudomonas putida (strain W619), this protein is Probable protein kinase UbiB.